A 341-amino-acid polypeptide reads, in one-letter code: Protein pelota homolog (341 aa).

Belongs to the eukaryotic release factor 1 family. Pelota subfamily. Monomer. Requires a divalent metal cation as cofactor.

It localises to the cytoplasm. Functionally, may function in recognizing stalled ribosomes, interact with stem-loop structures in stalled mRNA molecules, and effect endonucleolytic cleavage of the mRNA. May play a role in the release non-functional ribosomes and degradation of damaged mRNAs. Has endoribonuclease activity. This Methanoculleus marisnigri (strain ATCC 35101 / DSM 1498 / JR1) protein is Protein pelota homolog.